We begin with the raw amino-acid sequence, 437 residues long: Coiled-coil domain-containing protein 78 (437 aa).

Coiled coils occupy residues 83–114 (HLRE…LHGN), 147–287 (EELK…QRQE), and 360–408 (QRLQ…YKQE).

Belongs to the CCDC78 family.

Its subcellular location is the cytoplasm. It localises to the cytoskeleton. The protein resides in the microtubule organizing center. It is found in the centrosome. The protein localises to the centriole. Its subcellular location is the perinuclear region. It localises to the cell membrane. The protein resides in the sarcolemma. It is found in the sarcoplasmic reticulum. Functionally, component of the deuterosome, a structure that promotes de novo centriole amplification in multiciliated cells that can generate more than 100 centrioles. Deuterosome-mediated centriole amplification occurs in terminally differentiated multiciliated cells (G1/0) and not in S phase. Essential for centriole amplification and is required for CEP152 localization to the deuterosome. This is Coiled-coil domain-containing protein 78 (Ccdc78) from Mus musculus (Mouse).